The sequence spans 160 residues: SsrA-binding protein (160 aa).

The protein belongs to the SmpB family.

It is found in the cytoplasm. In terms of biological role, required for rescue of stalled ribosomes mediated by trans-translation. Binds to transfer-messenger RNA (tmRNA), required for stable association of tmRNA with ribosomes. tmRNA and SmpB together mimic tRNA shape, replacing the anticodon stem-loop with SmpB. tmRNA is encoded by the ssrA gene; the 2 termini fold to resemble tRNA(Ala) and it encodes a 'tag peptide', a short internal open reading frame. During trans-translation Ala-aminoacylated tmRNA acts like a tRNA, entering the A-site of stalled ribosomes, displacing the stalled mRNA. The ribosome then switches to translate the ORF on the tmRNA; the nascent peptide is terminated with the 'tag peptide' encoded by the tmRNA and targeted for degradation. The ribosome is freed to recommence translation, which seems to be the essential function of trans-translation. This is SsrA-binding protein from Klebsiella pneumoniae (strain 342).